Consider the following 1625-residue polypeptide: Probable cation-transporting ATPase I (1625 aa).

The next 8 membrane-spanning stretches (helical) occupy residues 148–168 (VVSA…PNSA), 177–197 (LAIL…GATV), 358–378 (LIAA…AGAI), 637–657 (ASES…LLLV), 673–693 (WLNP…WSAA), 778–798 (ILAV…ALLV), 968–988 (LTSK…ALAL), and 997–1017 (AVAD…PLVA). Residue D1053 is the 4-aspartylphosphate intermediate of the active site. Residues D1340 and D1344 each coordinate Mg(2+). The next 3 membrane-spanning stretches (helical) occupy residues 1401-1421 (ILVG…AFGA), 1432-1452 (LLVN…TSQF), and 1547-1567 (VIAT…TPVI).

The protein belongs to the cation transport ATPase (P-type) (TC 3.A.3) family.

It is found in the cell membrane. It carries out the reaction ATP + H2O = ADP + phosphate + H(+). In Mycobacterium tuberculosis (strain CDC 1551 / Oshkosh), this protein is Probable cation-transporting ATPase I (ctpI).